The following is a 137-amino-acid chain: Large ribosomal subunit protein uL16 (137 aa).

This sequence belongs to the universal ribosomal protein uL16 family. In terms of assembly, part of the 50S ribosomal subunit.

Its function is as follows. Binds 23S rRNA and is also seen to make contacts with the A and possibly P site tRNAs. The protein is Large ribosomal subunit protein uL16 of Xanthomonas campestris pv. campestris (strain 8004).